An 884-amino-acid polypeptide reads, in one-letter code: Receptor-like protein 39 (884 aa).

The signal sequence occupies residues 1–24 (MSELLFRLNFLLLLLLSCVSLASS). Over 25–847 (FFSFNDPVVG…EEEEQVLNWK (823 aa)) the chain is Extracellular. N-linked (GlcNAc...) asparagine glycosylation is found at Asn-59, Asn-71, and Asn-92. 10 LRR repeats span residues 98–122 (FHQL…EFGM), 124–146 (NKLE…SFSN), 147–170 (LSML…VRNL), 171–196 (RKLT…LFEL), 197–223 (HNLA…NLNK), 225–245 (ELLD…ISNL), 246–268 (TQLT…VQNL), 269–292 (TKLS…LFTM), 294–318 (FLSY…SLSS), and 320–344 (LENL…LINL). A glycan (N-linked (GlcNAc...) asparagine) is linked at Asn-146. N-linked (GlcNAc...) asparagine glycosylation is found at Asn-190, Asn-208, Asn-244, and Asn-267. N-linked (GlcNAc...) asparagine glycosylation is found at Asn-304 and Asn-313. An LRR 11; degenerate repeat occupies 345–365 (KELHLSFLNTSYPINLKLFSS). N-linked (GlcNAc...) asparagine glycosylation occurs at Asn-353. 5 LRR repeats span residues 366–391 (LKYL…SYIP), 392–413 (STLE…ILKT), 414–438 (LPNL…LWSL), 440–463 (RLSS…ILVN), and 464–487 (SSVR…PLSV). N-linked (GlcNAc...) asparagine glycosylation is present at Asn-403. Asn-463 is a glycosylation site (N-linked (GlcNAc...) asparagine). One copy of the LRR 17; degenerate repeat lies at 488–507 (NYFSARNNRYGGDIPLSICS). 10 LRR repeats span residues 508-529 (RRSL…PPCP), 530-553 (SNFL…YYAD), 554-577 (APLR…LLNC), 579-601 (ALQF…LKAL), 602-625 (PKLQ…NQGS), 628-652 (FPEL…FFEN), 702-725 (SSSA…IGLL), 726-749 (KALI…LANL), 750-773 (KKIE…IGTL), and 775-798 (FLAY…QITG). N-linked (GlcNAc...) asparagine glycosylation is present at Asn-520. A glycan (N-linked (GlcNAc...) asparagine) is linked at Asn-576. Asn-732 carries an N-linked (GlcNAc...) asparagine glycan. The N-linked (GlcNAc...) asparagine glycan is linked to Asn-780. The chain crosses the membrane as a helical span at residues 848–868 (GVGIGYGVGVLLGLAIAQLIA). Topologically, residues 869 to 884 (SYKPEWLVFLFQSRNH) are cytoplasmic.

Belongs to the RLP family.

The protein resides in the cell membrane. The chain is Receptor-like protein 39 from Arabidopsis thaliana (Mouse-ear cress).